A 553-amino-acid polypeptide reads, in one-letter code: Hydroxylamine reductase (553 aa).

4 residues coordinate [2Fe-2S] cluster: Cys3, Cys6, Cys18, and Cys25. Residues His252, Glu276, Cys320, Cys408, Cys436, Cys461, Glu495, and Lys497 each contribute to the hybrid [4Fe-2O-2S] cluster site. Cys408 is subject to Cysteine persulfide.

This sequence belongs to the HCP family. Requires [2Fe-2S] cluster as cofactor. Hybrid [4Fe-2O-2S] cluster is required as a cofactor.

The protein resides in the cytoplasm. It carries out the reaction A + NH4(+) + H2O = hydroxylamine + AH2 + H(+). Its function is as follows. Catalyzes the reduction of hydroxylamine to form NH(3) and H(2)O. The sequence is that of Hydroxylamine reductase from Tolumonas auensis (strain DSM 9187 / NBRC 110442 / TA 4).